Consider the following 243-residue polypeptide: Calcium-binding protein LPS1-beta (243 aa).

EF-hand domains lie at 15–49 (EVID…DCPE), 47–82 (CPEE…YTKE), 85–120 (YSSD…ISTK), 121–156 (LVEG…KLPL), 157–189 (CFKK…NLPG), 191–226 (YSEE…LSKD), and 227–243 (DIKN…NGKI). Ca(2+)-binding residues include Asp-29, Asn-31, Asp-33, Thr-35, Glu-40, Asp-60, Asn-62, Asp-64, Arg-66, Glu-71, Asp-98, Asp-100, Asn-102, Arg-104, Glu-109, Asp-134, Asp-136, Asp-138, His-140, Glu-145, Asp-167, Asn-169, Asp-171, Ser-173, Glu-178, Asp-204, Asn-206, Asp-208, Arg-210, and Glu-215.

As to expression, aboral ectoderm, a squamous epithelium covering the surface of the late stage embryo and larva.

Its function is as follows. Calcium-binding protein involved in larval development and metamorphosis. Likely to function as calcium buffers mediating the transport of calcium from the sea water to the blastocoel where calcium is required for skeleton formation. The sequence is that of Calcium-binding protein LPS1-beta from Lytechinus pictus (Painted sea urchin).